The sequence spans 268 residues: 3-methyl-2-oxobutanoate hydroxymethyltransferase (268 aa).

Mg(2+) contacts are provided by D46 and D85. 3-methyl-2-oxobutanoate-binding positions include 46 to 47, D85, and K115; that span reads DS. Residue E117 coordinates Mg(2+). E184 (proton acceptor) is an active-site residue.

It belongs to the PanB family. As to quaternary structure, homodecamer; pentamer of dimers. Requires Mg(2+) as cofactor.

The protein resides in the cytoplasm. It catalyses the reaction 3-methyl-2-oxobutanoate + (6R)-5,10-methylene-5,6,7,8-tetrahydrofolate + H2O = 2-dehydropantoate + (6S)-5,6,7,8-tetrahydrofolate. Its pathway is cofactor biosynthesis; (R)-pantothenate biosynthesis; (R)-pantoate from 3-methyl-2-oxobutanoate: step 1/2. In terms of biological role, catalyzes the reversible reaction in which hydroxymethyl group from 5,10-methylenetetrahydrofolate is transferred onto alpha-ketoisovalerate to form ketopantoate. This Magnetococcus marinus (strain ATCC BAA-1437 / JCM 17883 / MC-1) protein is 3-methyl-2-oxobutanoate hydroxymethyltransferase.